The primary structure comprises 264 residues: 3-methyl-2-oxobutanoate hydroxymethyltransferase (264 aa).

Asp45 and Asp84 together coordinate Mg(2+). 3-methyl-2-oxobutanoate is bound by residues 45-46, Asp84, and Lys112; that span reads DS. A Mg(2+)-binding site is contributed by Glu114. The active-site Proton acceptor is the Glu181.

Belongs to the PanB family. In terms of assembly, homodecamer; pentamer of dimers. Mg(2+) serves as cofactor.

The protein localises to the cytoplasm. The enzyme catalyses 3-methyl-2-oxobutanoate + (6R)-5,10-methylene-5,6,7,8-tetrahydrofolate + H2O = 2-dehydropantoate + (6S)-5,6,7,8-tetrahydrofolate. It functions in the pathway cofactor biosynthesis; (R)-pantothenate biosynthesis; (R)-pantoate from 3-methyl-2-oxobutanoate: step 1/2. Catalyzes the reversible reaction in which hydroxymethyl group from 5,10-methylenetetrahydrofolate is transferred onto alpha-ketoisovalerate to form ketopantoate. The protein is 3-methyl-2-oxobutanoate hydroxymethyltransferase of Edwardsiella ictaluri (strain 93-146).